The sequence spans 36 residues: Omega-agatoxin-Aa1b (36 aa).

It belongs to the neurotoxin 04 (omega-agtx) family. 01 (type I omega-agtx) subfamily. Expressed by the venom gland.

The protein resides in the secreted. Functionally, omega-agatoxin are antagonist of voltage-gated calcium channels. They block insect neuromuscular transmission presynaptically. This toxin is a blocker of L-type calcium channels (Cav/CACNA1). The sequence is that of Omega-agatoxin-Aa1b from Agelenopsis aperta (North American funnel-web spider).